A 95-amino-acid chain; its full sequence is Small ribosomal subunit protein uS19 (95 aa).

The protein belongs to the universal ribosomal protein uS19 family.

Its function is as follows. Protein S19 forms a complex with S13 that binds strongly to the 16S ribosomal RNA. The chain is Small ribosomal subunit protein uS19 from Thermosipho africanus (strain TCF52B).